Reading from the N-terminus, the 497-residue chain is Serine hydroxymethyltransferase (497 aa).

(6S)-5,6,7,8-tetrahydrofolate-binding positions include L176 and 180–182; that span reads GHL. K289 is modified (N6-(pyridoxal phosphate)lysine).

This sequence belongs to the SHMT family. In terms of assembly, homodimer. Pyridoxal 5'-phosphate is required as a cofactor.

It is found in the cytoplasm. The catalysed reaction is (6R)-5,10-methylene-5,6,7,8-tetrahydrofolate + glycine + H2O = (6S)-5,6,7,8-tetrahydrofolate + L-serine. It functions in the pathway one-carbon metabolism; tetrahydrofolate interconversion. It participates in amino-acid biosynthesis; glycine biosynthesis; glycine from L-serine: step 1/1. Functionally, catalyzes the reversible interconversion of serine and glycine with tetrahydrofolate (THF) serving as the one-carbon carrier. This reaction serves as the major source of one-carbon groups required for the biosynthesis of purines, thymidylate, methionine, and other important biomolecules. Also exhibits THF-independent aldolase activity toward beta-hydroxyamino acids, producing glycine and aldehydes, via a retro-aldol mechanism. The protein is Serine hydroxymethyltransferase of Chlamydia trachomatis serovar L2b (strain UCH-1/proctitis).